The sequence spans 446 residues: Tubulin beta-1 chain (446 aa).

Residues Q11, E69, S138, G142, T143, G144, N204, and N226 each coordinate GTP. E69 lines the Mg(2+) pocket.

It belongs to the tubulin family. As to quaternary structure, dimer of alpha and beta chains. A typical microtubule is a hollow water-filled tube with an outer diameter of 25 nm and an inner diameter of 15 nM. Alpha-beta heterodimers associate head-to-tail to form protofilaments running lengthwise along the microtubule wall with the beta-tubulin subunit facing the microtubule plus end conferring a structural polarity. Microtubules usually have 13 protofilaments but different protofilament numbers can be found in some organisms and specialized cells. The cofactor is Mg(2+).

The protein resides in the cytoplasm. Its subcellular location is the cytoskeleton. Tubulin is the major constituent of microtubules, a cylinder consisting of laterally associated linear protofilaments composed of alpha- and beta-tubulin heterodimers. Microtubules grow by the addition of GTP-tubulin dimers to the microtubule end, where a stabilizing cap forms. Below the cap, tubulin dimers are in GDP-bound state, owing to GTPase activity of alpha-tubulin. The protein is Tubulin beta-1 chain (TUBB1) of Suillus bovinus (Jersey cow bolete).